Reading from the N-terminus, the 340-residue chain is Guanine nucleotide-binding protein G(I)/G(S)/G(T) subunit beta-3 (340 aa).

7 WD repeats span residues 53–83 (GHLAKIYAMHWATDSKLLVSASQDGKLIVWD), 95–125 (LRSSWVMTCAYAPSGNFVACGGLDNMCSIYS), 141–170 (AHTGYLSCCRFLDDNNIVTSSGDTTCALWD), 182–212 (GHTGDCMSLAVSPDYKLFISGACDASAKLWD), 224–254 (GHESDINAICFFPNGEAICTGSDDASCRLFD), 268–298 (SIICGITSVAFSLSGRLLFAGYDDFNCNVWD), and 310–340 (GHDNRVSCLGVTADGMAVATGSWDSFLKIWN).

The protein belongs to the WD repeat G protein beta family. G proteins are composed of 3 units, alpha, beta and gamma. Interacts with RASD2. As to expression, expressed at a high level in the heart and at a much lower level in the brain.

In terms of biological role, guanine nucleotide-binding proteins (G proteins) are involved as a modulator or transducer in various transmembrane signaling systems. The beta and gamma chains are required for the GTPase activity, for replacement of GDP by GTP, and for G protein-effector interaction. This chain is Guanine nucleotide-binding protein G(I)/G(S)/G(T) subunit beta-3 (Gnb3), found in Rattus norvegicus (Rat).